The primary structure comprises 584 residues: DNA mismatch repair protein MutL (584 aa).

It belongs to the DNA mismatch repair MutL/HexB family.

Its function is as follows. This protein is involved in the repair of mismatches in DNA. It is required for dam-dependent methyl-directed DNA mismatch repair. May act as a 'molecular matchmaker', a protein that promotes the formation of a stable complex between two or more DNA-binding proteins in an ATP-dependent manner without itself being part of a final effector complex. This is DNA mismatch repair protein MutL from Syntrophomonas wolfei subsp. wolfei (strain DSM 2245B / Goettingen).